The primary structure comprises 117 residues: Large ribosomal subunit protein bL20 (117 aa).

Belongs to the bacterial ribosomal protein bL20 family.

Binds directly to 23S ribosomal RNA and is necessary for the in vitro assembly process of the 50S ribosomal subunit. It is not involved in the protein synthesizing functions of that subunit. The protein is Large ribosomal subunit protein bL20 of Geobacter sulfurreducens (strain ATCC 51573 / DSM 12127 / PCA).